A 162-amino-acid polypeptide reads, in one-letter code: MALRIWASSTANALRLSSATRPHFSPLSRCFSSVLDGLKYANSHEWVKHEGSVATIGITDHAQDHLGEVVFVDLPEAGGSVTKATGFGAVESVKATSDVNSPISGEIVEVNSKLSETPGLINSSPYEDGWMIKVKPSNPSELDSLMGAKEYTKFCEEEDSAH.

The transit peptide at 1–31 (MALRIWASSTANALRLSSATRPHFSPLSRCF) directs the protein to the mitochondrion. Residues 53–135 (VATIGITDHA…YEDGWMIKVK (83 aa)) form the Lipoyl-binding domain. Position 94 is an N6-lipoyllysine (lysine 94).

It belongs to the GcvH family. As to quaternary structure, the glycine cleavage system is composed of four proteins: P, T, L and H. It depends on (R)-lipoate as a cofactor.

It localises to the mitochondrion. The glycine cleavage system catalyzes the degradation of glycine. The H protein shuttles the methylamine group of glycine from the P protein to the T protein. The chain is Glycine cleavage system H protein, mitochondrial (GDCSH) from Flaveria pringlei.